Here is a 1544-residue protein sequence, read N- to C-terminus: Transcriptional activator GLI3 (1544 aa).

2 stretches are compositionally biased toward polar residues: residues 1–10 and 402–429; these read MEAQSHSSTT and NPVQ…SSTG. 2 disordered regions span residues 1–83 and 373–477; these read MEAQ…EERA and SAFG…QEPE. Basic and acidic residues predominate over residues 463–476; it reads VKEEGDKDESKQEP. The C2H2-type 1 zinc-finger motif lies at 482–509; sequence TNCHWEGCSREFDTQEQLVHHINNDHIH. The segment at 520 to 542 adopts a C2H2-type 2; degenerate zinc-finger fold; that stretch reads LDCSREQKPFKAQYMLVVHMRRH. 3 consecutive C2H2-type zinc fingers follow at residues 548 to 572, 578 to 603, and 609 to 634; these read HKCT…LRSH, YVCE…NRTH, and YVCK…KTVH. Disordered stretches follow at residues 622-728, 865-919, 1126-1155, and 1327-1368; these read DPSS…YSNN, RSSG…DLPS, SVVL…VSKS, and HYQG…GNQS. The span at 634-650 shows a compositional bias: basic and acidic residues; sequence HGPEAHVTKKQRGDIHP. Polar residues predominate over residues 660-685; the sequence is SHSQTRSPGQQTQGATGEQKDLNSTT. Residues 686-701 show a composition bias toward basic and acidic residues; sequence SRREECLQVKAVKSEK. Over residues 702 to 728 the composition is skewed to polar residues; it reads PMTSQPSPGGQSTCSSEQSPISNYSNN. Over residues 865–882 the composition is skewed to low complexity; it reads RSSGISPCFSSRRSSDAS. Residues 1330-1355 are compositionally biased toward polar residues; it reads GVNQSSPMTLGQVSPTSQSSLHQGPQ.

The protein belongs to the GLI C2H2-type zinc-finger protein family. Phosphorylation is essential for its proteolytic processing. Post-translationally, the repressor form (GLI3R), a C-terminally truncated form is generated from the full-length GLI3 protein (GLI3FL) through proteolytic processing.

It localises to the nucleus. The protein localises to the cytoplasm. Has a dual function as a transcriptional activator and a repressor of the sonic hedgehog (Shh) pathway, and plays a role in limb development. The full-length GLI3 form (GLI3FL) acts as an activator (GLI3A) while GLI3R, its C-terminally truncated form, acts as a repressor. The protein is Transcriptional activator GLI3 (GLI3) of Gallus gallus (Chicken).